Consider the following 382-residue polypeptide: UDP-4-amino-4-deoxy-L-arabinose--oxoglutarate aminotransferase (382 aa).

An N6-(pyridoxal phosphate)lysine modification is found at Lys182.

Belongs to the DegT/DnrJ/EryC1 family. ArnB subfamily. As to quaternary structure, homodimer. It depends on pyridoxal 5'-phosphate as a cofactor.

It carries out the reaction UDP-4-amino-4-deoxy-beta-L-arabinose + 2-oxoglutarate = UDP-beta-L-threo-pentopyranos-4-ulose + L-glutamate. The protein operates within nucleotide-sugar biosynthesis; UDP-4-deoxy-4-formamido-beta-L-arabinose biosynthesis; UDP-4-deoxy-4-formamido-beta-L-arabinose from UDP-alpha-D-glucuronate: step 2/3. It participates in bacterial outer membrane biogenesis; lipopolysaccharide biosynthesis. Its function is as follows. Catalyzes the conversion of UDP-4-keto-arabinose (UDP-Ara4O) to UDP-4-amino-4-deoxy-L-arabinose (UDP-L-Ara4N). The modified arabinose is attached to lipid A and is required for resistance to polymyxin and cationic antimicrobial peptides. In Yersinia enterocolitica serotype O:8 / biotype 1B (strain NCTC 13174 / 8081), this protein is UDP-4-amino-4-deoxy-L-arabinose--oxoglutarate aminotransferase.